Consider the following 166-residue polypeptide: Nascent polypeptide-associated complex subunit beta (166 aa).

Disordered regions lie at residues 1–40 (MVLN…EDPK) and 129–166 (HAAS…DKLD). In terms of domain architecture, NAC-A/B spans 35–100 (GGEDPKLQAA…GVDKELTELV (66 aa)). The span at 141 to 153 (DDDDVPDVVENFD) shows a compositional bias: acidic residues. Residues 154–166 (EADKKETEVDKLD) show a composition bias toward basic and acidic residues.

This sequence belongs to the NAC-beta family. As to quaternary structure, part of the nascent polypeptide-associated complex (NAC), consisting of EGD2 and EGD1. NAC associates with ribosomes via EGD1.

It localises to the cytoplasm. It is found in the nucleus. In terms of biological role, component of the nascent polypeptide-associated complex (NAC), a dynamic component of the ribosomal exit tunnel, protecting the emerging polypeptides from interaction with other cytoplasmic proteins to ensure appropriate nascent protein targeting. The NAC complex also promotes mitochondrial protein import by enhancing productive ribosome interactions with the outer mitochondrial membrane and blocks the inappropriate interaction of ribosomes translating non-secretory nascent polypeptides with translocation sites in the membrane of the endoplasmic reticulum. EGD1 may act as a transcription factor that exert a negative effect on the expression of several genes that are transcribed by RNA polymerase II. The polypeptide is Nascent polypeptide-associated complex subunit beta (EGD1) (Mycosarcoma maydis (Corn smut fungus)).